Reading from the N-terminus, the 123-residue chain is Large ribosomal subunit protein uL18 (123 aa).

The protein belongs to the universal ribosomal protein uL18 family. As to quaternary structure, part of the 50S ribosomal subunit; part of the 5S rRNA/L5/L18/L25 subcomplex. Contacts the 5S and 23S rRNAs.

Functionally, this is one of the proteins that bind and probably mediate the attachment of the 5S RNA into the large ribosomal subunit, where it forms part of the central protuberance. This is Large ribosomal subunit protein uL18 from Chlamydia caviae (strain ATCC VR-813 / DSM 19441 / 03DC25 / GPIC) (Chlamydophila caviae).